Here is a 70-residue protein sequence, read N- to C-terminus: Guanine nucleotide-binding protein G(I)/G(S)/G(O) subunit gamma-8 (70 aa).

Cys67 carries the cysteine methyl ester modification. Cys67 carries S-geranylgeranyl cysteine lipidation. The propeptide at Val68–Leu70 is removed in mature form.

Belongs to the G protein gamma family. In terms of assembly, g proteins are composed of 3 units, alpha, beta and gamma.

The protein localises to the cell membrane. Its function is as follows. Guanine nucleotide-binding proteins (G proteins) are involved as a modulator or transducer in various transmembrane signaling systems. The beta and gamma chains are required for the GTPase activity, for replacement of GDP by GTP, and for G protein-effector interaction. The sequence is that of Guanine nucleotide-binding protein G(I)/G(S)/G(O) subunit gamma-8 (GNG8) from Homo sapiens (Human).